The following is a 397-amino-acid chain: UPF0597 protein Tmel_1007 (397 aa).

It belongs to the UPF0597 family.

The polypeptide is UPF0597 protein Tmel_1007 (Thermosipho melanesiensis (strain DSM 12029 / CIP 104789 / BI429)).